We begin with the raw amino-acid sequence, 150 residues long: Large ribosomal subunit protein bL9 (150 aa).

Belongs to the bacterial ribosomal protein bL9 family.

Binds to the 23S rRNA. This chain is Large ribosomal subunit protein bL9, found in Vibrio parahaemolyticus serotype O3:K6 (strain RIMD 2210633).